The primary structure comprises 327 residues: Phenylalanine--tRNA ligase alpha subunit (327 aa).

Position 252 (Glu-252) interacts with Mg(2+).

Belongs to the class-II aminoacyl-tRNA synthetase family. Phe-tRNA synthetase alpha subunit type 1 subfamily. As to quaternary structure, tetramer of two alpha and two beta subunits. It depends on Mg(2+) as a cofactor.

It localises to the cytoplasm. It carries out the reaction tRNA(Phe) + L-phenylalanine + ATP = L-phenylalanyl-tRNA(Phe) + AMP + diphosphate + H(+). This is Phenylalanine--tRNA ligase alpha subunit from Erwinia tasmaniensis (strain DSM 17950 / CFBP 7177 / CIP 109463 / NCPPB 4357 / Et1/99).